A 357-amino-acid chain; its full sequence is UPF0283 membrane protein BSUIS_A1077 (357 aa).

The interval 1–36 is disordered; it reads MSDKTPRKPTAFRLEQPARVSAASEQEEPRHPRAVK. Residues 27 to 36 are compositionally biased toward basic and acidic residues; sequence EEPRHPRAVK. Transmembrane regions (helical) follow at residues 78–98 and 109–129; these read ILFG…TEDL and LGWT…AIIL.

The protein belongs to the UPF0283 family.

It is found in the cell inner membrane. In Brucella suis (strain ATCC 23445 / NCTC 10510), this protein is UPF0283 membrane protein BSUIS_A1077.